Consider the following 688-residue polypeptide: UvrABC system protein B (688 aa).

The Helicase ATP-binding domain maps to 31-414; it reads GRITAGETDV…LGIADGVVEQ (384 aa). 44 to 51 lines the ATP pocket; it reads GATGTGKS. The Beta-hairpin motif lies at 97–120; sequence YYDYYQPEAYVPQTDTFIEKDSSI. A Helicase C-terminal domain is found at 434–600; that stretch reads QIDDLLEEIR…PLRKRIADIT (167 aa). Residues 614–633 form a disordered region; the sequence is LAGRDQKRKSPTPSLRSGGI. Positions 642–677 constitute a UVR domain; sequence ESLIADLNAQMLAAAGELKFELAARLRDELSDLKRD.

The protein belongs to the UvrB family. As to quaternary structure, forms a heterotetramer with UvrA during the search for lesions. Interacts with UvrC in an incision complex.

It localises to the cytoplasm. Functionally, the UvrABC repair system catalyzes the recognition and processing of DNA lesions. A damage recognition complex composed of 2 UvrA and 2 UvrB subunits scans DNA for abnormalities. Upon binding of the UvrA(2)B(2) complex to a putative damaged site, the DNA wraps around one UvrB monomer. DNA wrap is dependent on ATP binding by UvrB and probably causes local melting of the DNA helix, facilitating insertion of UvrB beta-hairpin between the DNA strands. Then UvrB probes one DNA strand for the presence of a lesion. If a lesion is found the UvrA subunits dissociate and the UvrB-DNA preincision complex is formed. This complex is subsequently bound by UvrC and the second UvrB is released. If no lesion is found, the DNA wraps around the other UvrB subunit that will check the other stand for damage. The protein is UvrABC system protein B of Leifsonia xyli subsp. xyli (strain CTCB07).